The chain runs to 89 residues: Elongation factor 1-beta (89 aa).

This sequence belongs to the EF-1-beta/EF-1-delta family.

In terms of biological role, promotes the exchange of GDP for GTP in EF-1-alpha/GDP, thus allowing the regeneration of EF-1-alpha/GTP that could then be used to form the ternary complex EF-1-alpha/GTP/AAtRNA. In Methanosarcina acetivorans (strain ATCC 35395 / DSM 2834 / JCM 12185 / C2A), this protein is Elongation factor 1-beta.